The sequence spans 231 residues: Acyl-protein thioesterase 2 (231 aa).

C2 carries S-palmitoyl cysteine lipidation. S82 is subject to Phosphoserine. Catalysis depends on charge relay system residues S122, D176, and H210.

Belongs to the AB hydrolase superfamily. AB hydrolase 2 family.

The protein resides in the cytoplasm. The enzyme catalyses S-hexadecanoyl-L-cysteinyl-[protein] + H2O = L-cysteinyl-[protein] + hexadecanoate + H(+). It catalyses the reaction prostaglandin E2 1-glyceryl ester + H2O = prostaglandin E2 + glycerol + H(+). The catalysed reaction is 1-hexadecanoyl-sn-glycero-3-phosphocholine + H2O = sn-glycerol 3-phosphocholine + hexadecanoate + H(+). It carries out the reaction 1-octadecanoyl-sn-glycero-3-phosphocholine + H2O = octadecanoate + sn-glycerol 3-phosphocholine + H(+). The enzyme catalyses 1-hexadecanoyl-sn-glycero-3-phosphate + H2O = sn-glycerol 3-phosphate + hexadecanoate + H(+). It catalyses the reaction 1-hexadecanoyl-sn-glycero-3-phospho-L-serine + H2O = sn-glycero-3-phospho-L-serine + hexadecanoate + H(+). Acts as an acyl-protein thioesterase hydrolyzing fatty acids from S-acylated cysteine residues in proteins such as trimeric G alpha proteins, GSDMD, GAP43, ZDHHC6 or HRAS. Deacylates GAP43. Mediates depalmitoylation of ZDHHC6. Has lysophospholipase activity. Hydrolyzes prostaglandin glycerol esters (PG-Gs) in the following order prostaglandin D2-glycerol ester (PGD2-G) &gt; prostaglandin E2 glycerol ester (PGE2-G) &gt; prostaglandin F2-alpha-glycerol ester (PGF2-alpha-G). Hydrolyzes 1-arachidonoylglycerol but not 2-arachidonoylglycerol or arachidonoylethanolamide. The chain is Acyl-protein thioesterase 2 (Lypla2) from Rattus norvegicus (Rat).